The primary structure comprises 388 residues: Succinate--CoA ligase [ADP-forming] subunit beta (388 aa).

An ATP-grasp domain is found at K9–R244. Residues K46, G53–G55, E99, T102, and E107 each bind ATP. 2 residues coordinate Mg(2+): N199 and D213. Substrate is bound by residues N264 and G321–V323.

It belongs to the succinate/malate CoA ligase beta subunit family. In terms of assembly, heterotetramer of two alpha and two beta subunits. Mg(2+) serves as cofactor.

It catalyses the reaction succinate + ATP + CoA = succinyl-CoA + ADP + phosphate. It carries out the reaction GTP + succinate + CoA = succinyl-CoA + GDP + phosphate. Its pathway is carbohydrate metabolism; tricarboxylic acid cycle; succinate from succinyl-CoA (ligase route): step 1/1. Succinyl-CoA synthetase functions in the citric acid cycle (TCA), coupling the hydrolysis of succinyl-CoA to the synthesis of either ATP or GTP and thus represents the only step of substrate-level phosphorylation in the TCA. The beta subunit provides nucleotide specificity of the enzyme and binds the substrate succinate, while the binding sites for coenzyme A and phosphate are found in the alpha subunit. In Serratia proteamaculans (strain 568), this protein is Succinate--CoA ligase [ADP-forming] subunit beta.